The following is a 611-amino-acid chain: Threonine--tRNA ligase (611 aa).

A disordered region spans residues 1–25 (MAGPDRKPVSSAAATTPAPSAPVVL). Positions 9-24 (VSSAAATTPAPSAPVV) are enriched in low complexity. A catalytic region spans residues 209–502 (DHRRIGKDLD…MTENYAGDYP (294 aa)). Cysteine 302, histidine 353, and histidine 479 together coordinate Zn(2+).

This sequence belongs to the class-II aminoacyl-tRNA synthetase family. In terms of assembly, homodimer. Requires Zn(2+) as cofactor.

Its subcellular location is the cytoplasm. It catalyses the reaction tRNA(Thr) + L-threonine + ATP = L-threonyl-tRNA(Thr) + AMP + diphosphate + H(+). In terms of biological role, catalyzes the attachment of threonine to tRNA(Thr) in a two-step reaction: L-threonine is first activated by ATP to form Thr-AMP and then transferred to the acceptor end of tRNA(Thr). Also edits incorrectly charged L-seryl-tRNA(Thr). The chain is Threonine--tRNA ligase from Parasynechococcus marenigrum (strain WH8102).